Consider the following 828-residue polypeptide: Periplasmic nitrate reductase (828 aa).

A signal peptide (tat-type signal) is located at residues 1–31 (MKLSRRSFMKANAVAAAAAAAGLSVPGVARA). One can recognise a 4Fe-4S Mo/W bis-MGD-type domain in the interval 39–95 (IKWDKAPCRFCGTGCGVLVGTQQGRVVACQGDPDAPVNRGLNCIKGYFLPKIMYGKD). 4 residues coordinate [4Fe-4S] cluster: C46, C49, C53, and C81. Mo-bis(molybdopterin guanine dinucleotide)-binding positions include K83, Q150, N175, C179, 212–219 (WGANMAEM), 243–247 (STYQH), 262–264 (QSD), M372, Q376, N482, 508–509 (SD), K531, D558, and 718–727 (TGRVLEHWHT). F794 provides a ligand contact to substrate. 2 residues coordinate Mo-bis(molybdopterin guanine dinucleotide): N802 and K819.

It belongs to the prokaryotic molybdopterin-containing oxidoreductase family. NasA/NapA/NarB subfamily. Component of the periplasmic nitrate reductase NapAB complex composed of NapA and NapB. The cofactor is [4Fe-4S] cluster. Mo-bis(molybdopterin guanine dinucleotide) serves as cofactor. Predicted to be exported by the Tat system. The position of the signal peptide cleavage has not been experimentally proven.

The protein resides in the periplasm. It catalyses the reaction 2 Fe(II)-[cytochrome] + nitrate + 2 H(+) = 2 Fe(III)-[cytochrome] + nitrite + H2O. Functionally, catalytic subunit of the periplasmic nitrate reductase complex NapAB. Receives electrons from NapB and catalyzes the reduction of nitrate to nitrite. In Escherichia coli O8 (strain IAI1), this protein is Periplasmic nitrate reductase.